The primary structure comprises 175 residues: MMTYIVFILSTVFVVGFVGFSSKPSPVYGGVGLIVSGGVGCGIIMNFSGSFLGLMVFLIYLGGMMVVFGYTAAMATELYPEVWVSNKVVFGAFVFGLFMEMLLVLYVLKEGSVGIAFEFSNLGDWVVYGVEDSGYFSKEAVGISSLYSYGMWLVVVTGWSLFIAVVVVMEVTRGG.

5 consecutive transmembrane segments (helical) span residues 1-21 (MMTY…VGFS), 27-47 (VYGG…IMNF), 49-69 (GSFL…VVFG), 88-108 (VVFG…LYVL), and 149-169 (YGMW…VVVM).

This sequence belongs to the complex I subunit 6 family. In terms of assembly, core subunit of respiratory chain NADH dehydrogenase (Complex I) which is composed of 45 different subunits.

Its subcellular location is the mitochondrion inner membrane. It catalyses the reaction a ubiquinone + NADH + 5 H(+)(in) = a ubiquinol + NAD(+) + 4 H(+)(out). In terms of biological role, core subunit of the mitochondrial membrane respiratory chain NADH dehydrogenase (Complex I) which catalyzes electron transfer from NADH through the respiratory chain, using ubiquinone as an electron acceptor. Essential for the catalytic activity and assembly of complex I. This chain is NADH-ubiquinone oxidoreductase chain 6 (MT-ND6), found in Pteropus scapulatus (Little red flying fox).